Consider the following 364-residue polypeptide: Mannose-1-phosphate guanyltransferase (364 aa).

This sequence belongs to the transferase hexapeptide repeat family.

It is found in the cytoplasm. It carries out the reaction alpha-D-mannose 1-phosphate + GTP + H(+) = GDP-alpha-D-mannose + diphosphate. It participates in nucleotide-sugar biosynthesis; GDP-alpha-D-mannose biosynthesis; GDP-alpha-D-mannose from alpha-D-mannose 1-phosphate (GTP route): step 1/1. Functionally, involved in cell wall synthesis where it is required for glycosylation. Involved in cell cycle progression through cell-size checkpoint. The chain is Mannose-1-phosphate guanyltransferase (MPG1) from Cryptococcus neoformans var. neoformans serotype D (strain B-3501A) (Filobasidiella neoformans).